The sequence spans 256 residues: uncharacterized protein (256 aa).

The first 22 residues, 1–22, serve as a signal peptide directing secretion; sequence MNNFRQCALCIGTSVLILLVSG. Cys23 carries N-palmitoyl cysteine lipidation. Cys23 carries the S-diacylglycerol cysteine lipid modification.

It belongs to the staphylococcal tandem lipoprotein family.

The protein localises to the cell membrane. This is an uncharacterized protein from Staphylococcus aureus (strain bovine RF122 / ET3-1).